Consider the following 405-residue polypeptide: Cytochrome P450 107B1 (405 aa).

Heme is bound at residue C352.

It belongs to the cytochrome P450 family. Requires heme as cofactor.

It is found in the cytoplasm. In terms of biological role, not known, probably involved in the catabolism of octane and guaiacol. It displays a weak activity in the O-dealkylation of 7-ethoxycoumarin. This Saccharopolyspora erythraea (strain ATCC 11635 / DSM 40517 / JCM 4748 / NBRC 13426 / NCIMB 8594 / NRRL 2338) protein is Cytochrome P450 107B1 (cyp107B1).